A 1005-amino-acid chain; its full sequence is Pikachurin (1005 aa).

The signal sequence occupies residues 1 to 24 (MDLISTFLLHFLLLACSLPPGAVS). Fibronectin type-III domains lie at 37 to 136 (PPLD…TLSQ) and 144 to 239 (APHQ…TLGP). Asn47 carries an N-linked (GlcNAc...) asparagine glycan. Positions 281–328 (PATKVGNKKSKKTSVSNSEMDSRLAQPTSASLPETTVAVPPTPAQRKG) are disordered. Positions 305 to 314 (AQPTSASLPE) are enriched in polar residues. The region spanning 339-377 (FDMSCDETLCSADSFCVNDYAWGGSRCHCNLGKGGEACS) is the EGF-like 1 domain. Disulfide bonds link Cys343–Cys354, Cys348–Cys365, Cys367–Cys376, Cys530–Cys560, Cys565–Cys576, Cys570–Cys586, Cys588–Cys597, Cys784–Cys795, Cys789–Cys804, Cys806–Cys815, and Cys975–Cys1002. The 179-residue stretch at 382–560 (IQYPQFFGHS…ALNGADVGEC (179 aa)) folds into the Laminin G-like 1 domain. 2 consecutive EGF-like domains span residues 561-598 (SSGI…RHCE) and 780-816 (AAHP…LNCQ). The region spanning 605 to 784 (IPQFRESLRS…VNVENAAHPC (180 aa)) is the Laminin G-like 2 domain. The region spanning 823–1002 (IEIPQFIGRS…AVDGKNINTC (180 aa)) is the Laminin G-like 3 domain.

Interacts with DAG1 alpha-dystroglycan. Interacts with GPR158 and GPR179; transsynaptic interaction is required for synaptic organization of photoreceptor cells. O-glycosylated; contains chondroitin sulfate and heparan sulfate.

The protein localises to the secreted. It is found in the extracellular space. It localises to the extracellular matrix. The protein resides in the synaptic cleft. Its subcellular location is the presynaptic active zone. Involved in both the retinal photoreceptor ribbon synapse formation and physiological functions of visual perception. Plays a key role in the synaptic organization of photoreceptors by mediating transsynaptic interaction between alpha-dystroglycan and GPR179 on the postsynaptic membrane. Necessary for proper bipolar dendritic tip apposition to the photoreceptor ribbon synapse. Promotes matrix assembly and cell adhesiveness. This Rattus norvegicus (Rat) protein is Pikachurin (Egflam).